The primary structure comprises 100 residues: Urease subunit gamma (100 aa).

This sequence belongs to the urease gamma subunit family. As to quaternary structure, heterotrimer of UreA (gamma), UreB (beta) and UreC (alpha) subunits. Three heterotrimers associate to form the active enzyme.

It localises to the cytoplasm. It carries out the reaction urea + 2 H2O + H(+) = hydrogencarbonate + 2 NH4(+). It participates in nitrogen metabolism; urea degradation; CO(2) and NH(3) from urea (urease route): step 1/1. The chain is Urease subunit gamma from Halalkalibacterium halodurans (strain ATCC BAA-125 / DSM 18197 / FERM 7344 / JCM 9153 / C-125) (Bacillus halodurans).